A 600-amino-acid polypeptide reads, in one-letter code: Myelin expression factor 2 (600 aa).

Positions 1-101 are disordered; sequence MADANKAEVP…GEKKGPNRNR (101 aa). Thr-13 is subject to Phosphothreonine. A Phosphoserine modification is found at Ser-17. Basic and acidic residues predominate over residues 27-42; sequence GEPRREPHPAEAEKQQ. Lys-53 is covalently cross-linked (Glycyl lysine isopeptide (Lys-Gly) (interchain with G-Cter in SUMO2)). Basic and acidic residues-rich tracts occupy residues 54–72 and 83–96; these read MEND…EKST and YSKD…EKKG. RRM domains are found at residues 100–178 and 233–310; these read NRVF…EDPD and STIF…MDDK. At Arg-406 the chain carries Omega-N-methylarginine. Residue Ser-431 is modified to Phosphoserine. One can recognise an RRM 3 domain in the interval 523 to 599; sequence NQIFVRNLPF…REIDVRLDRN (77 aa).

As to quaternary structure, monomer.

It is found in the nucleus. Functionally, transcriptional repressor of the myelin basic protein gene (MBP). Binds to the proximal MB1 element 5'-TTGTCC-3' of the MBP promoter. Its binding to MB1 and function are inhibited by PURA. The polypeptide is Myelin expression factor 2 (MYEF2) (Homo sapiens (Human)).